We begin with the raw amino-acid sequence, 230 residues long: Demethylmenaquinone methyltransferase (230 aa).

Residues Thr62, Asp80, 102–103 (DG), and Ser119 each bind S-adenosyl-L-methionine.

It belongs to the class I-like SAM-binding methyltransferase superfamily. MenG/UbiE family.

The enzyme catalyses a 2-demethylmenaquinol + S-adenosyl-L-methionine = a menaquinol + S-adenosyl-L-homocysteine + H(+). The protein operates within quinol/quinone metabolism; menaquinone biosynthesis; menaquinol from 1,4-dihydroxy-2-naphthoate: step 2/2. Functionally, methyltransferase required for the conversion of demethylmenaquinol (DMKH2) to menaquinol (MKH2). This is Demethylmenaquinone methyltransferase from Streptomyces griseus subsp. griseus (strain JCM 4626 / CBS 651.72 / NBRC 13350 / KCC S-0626 / ISP 5235).